The following is an 843-amino-acid chain: Protein translocase subunit SecA 1 (843 aa).

Residues glutamine 91, 109–113 (GEGKT), and aspartate 498 contribute to the ATP site. A compositionally biased stretch (basic and acidic residues) spans 799-813 (EAKHVSAEDGKEKVK). A disordered region spans residues 799–826 (EAKHVSAEDGKEKVKPKPIVKGDQVGRN). Zn(2+)-binding residues include cysteine 829, cysteine 831, cysteine 840, and histidine 841.

It belongs to the SecA family. As to quaternary structure, monomer and homodimer. Part of the essential Sec protein translocation apparatus which comprises SecA, SecYEG and auxiliary proteins SecDF. Other proteins may also be involved. Zn(2+) is required as a cofactor.

It is found in the cell membrane. The protein localises to the cytoplasm. The enzyme catalyses ATP + H2O + cellular proteinSide 1 = ADP + phosphate + cellular proteinSide 2.. In terms of biological role, part of the Sec protein translocase complex. Interacts with the SecYEG preprotein conducting channel. Has a central role in coupling the hydrolysis of ATP to the transfer of proteins into and across the cell membrane, serving as an ATP-driven molecular motor driving the stepwise translocation of polypeptide chains across the membrane. The sequence is that of Protein translocase subunit SecA 1 from Staphylococcus aureus (strain MRSA252).